The following is a 2076-amino-acid chain: Protein Ycf2 (2076 aa).

ATP is bound at residue 1458–1465; the sequence is GSIGTGRS.

It belongs to the Ycf2 family.

It is found in the plastid. The protein resides in the chloroplast stroma. Probable ATPase of unknown function. Its presence in a non-photosynthetic plant (Epifagus virginiana) and experiments in tobacco indicate that it has an essential function which is probably not related to photosynthesis. The sequence is that of Protein Ycf2 from Acorus calamus (Sweet flag).